Consider the following 166-residue polypeptide: Phospholipase A2 inhibitor A1 (166 aa).

The first 19 residues, 1-19, serve as a signal peptide directing secretion; it reads MRLILLSGLLLLGIFLANG. Residues 46–161 form the C-type lectin domain; the sequence is LKGSFLIVHK…CDDNLLVVCE (116 aa). 2 cysteine pairs are disulfide-bonded: Cys-83/Cys-160 and Cys-138/Cys-152. The N-linked (GlcNAc...) asparagine glycan is linked to Asn-122.

The protein belongs to the alpha-type phospholipase A2 inhibitor family. As to quaternary structure, homotrimer; non-covalently linked. In terms of tissue distribution, expressed by the liver.

It localises to the secreted. Its function is as follows. This phospholipase A2 inhibitor binds directly phospholipase A2 in the presence or absence of calcium. The sequence is that of Phospholipase A2 inhibitor A1 from Bothrops neuwiedi (Neuwied's lancehead).